A 299-amino-acid polypeptide reads, in one-letter code: tRNA dimethylallyltransferase (299 aa).

5–12 (GPTASGKT) contributes to the ATP binding site. 7–12 (TASGKT) is a binding site for substrate. Interaction with substrate tRNA regions lie at residues 30–33 (DSAL), 154–158 (QRLSR), and 235–240 (RCVGYR).

The protein belongs to the IPP transferase family. Monomer. Mg(2+) is required as a cofactor.

It carries out the reaction adenosine(37) in tRNA + dimethylallyl diphosphate = N(6)-dimethylallyladenosine(37) in tRNA + diphosphate. Catalyzes the transfer of a dimethylallyl group onto the adenine at position 37 in tRNAs that read codons beginning with uridine, leading to the formation of N6-(dimethylallyl)adenosine (i(6)A). The polypeptide is tRNA dimethylallyltransferase (Shewanella denitrificans (strain OS217 / ATCC BAA-1090 / DSM 15013)).